We begin with the raw amino-acid sequence, 116 residues long: Iron-sulfur cluster insertion protein ErpA (116 aa).

3 residues coordinate iron-sulfur cluster: Cys-44, Cys-108, and Cys-110.

The protein belongs to the HesB/IscA family. Homodimer. Requires iron-sulfur cluster as cofactor.

Functionally, required for insertion of 4Fe-4S clusters for at least IspG. The protein is Iron-sulfur cluster insertion protein ErpA of Pseudomonas aeruginosa (strain LESB58).